The primary structure comprises 292 residues: ABC transporter ATP-binding protein YtrB (292 aa).

The ABC transporter domain maps to 2–227 (IELRQLSKAI…YIKIQMAFDT (226 aa)). 34–41 (GRNGSGKT) serves as a coordination point for ATP.

The protein belongs to the ABC transporter superfamily. In terms of assembly, the complex is composed of 2 ATP-binding proteins (YtrB and YtrE), 2 transmembrane proteins (YtrC and YtrD) and a solute-binding protein (YtrF).

It localises to the cell membrane. Functionally, part of the ABC transporter complex YtrBCDEF that plays a role in acetoin utilization during stationary phase and sporulation. This Bacillus subtilis (strain 168) protein is ABC transporter ATP-binding protein YtrB (ytrB).